The primary structure comprises 275 residues: Light-independent protochlorophyllide reductase iron-sulfur ATP-binding protein (275 aa).

Residues Gly12–Thr17 and Lys41 each bind ATP. Ser16 serves as a coordination point for Mg(2+). Positions 97 and 131 each coordinate [4Fe-4S] cluster. Asn182–Arg183 serves as a coordination point for ATP.

Belongs to the NifH/BchL/ChlL family. Homodimer. Protochlorophyllide reductase is composed of three subunits; BchL, BchN and BchB. It depends on [4Fe-4S] cluster as a cofactor.

The catalysed reaction is chlorophyllide a + oxidized 2[4Fe-4S]-[ferredoxin] + 2 ADP + 2 phosphate = protochlorophyllide a + reduced 2[4Fe-4S]-[ferredoxin] + 2 ATP + 2 H2O. It participates in porphyrin-containing compound metabolism; bacteriochlorophyll biosynthesis (light-independent). In terms of biological role, component of the dark-operative protochlorophyllide reductase (DPOR) that uses Mg-ATP and reduced ferredoxin to reduce ring D of protochlorophyllide (Pchlide) to form chlorophyllide a (Chlide). This reaction is light-independent. The L component serves as a unique electron donor to the NB-component of the complex, and binds Mg-ATP. This Chlorobium limicola (strain DSM 245 / NBRC 103803 / 6330) protein is Light-independent protochlorophyllide reductase iron-sulfur ATP-binding protein.